A 254-amino-acid polypeptide reads, in one-letter code: 7-cyano-7-deazaguanine synthase (254 aa).

ATP is bound at residue 30–40 (YSGGQDSATCL). C218, C233, C236, and C239 together coordinate Zn(2+).

Belongs to the QueC family. Zn(2+) serves as cofactor.

The enzyme catalyses 7-carboxy-7-deazaguanine + NH4(+) + ATP = 7-cyano-7-deazaguanine + ADP + phosphate + H2O + H(+). It participates in purine metabolism; 7-cyano-7-deazaguanine biosynthesis. Catalyzes the ATP-dependent conversion of 7-carboxy-7-deazaguanine (CDG) to 7-cyano-7-deazaguanine (preQ(0)). The sequence is that of 7-cyano-7-deazaguanine synthase from Zymomonas mobilis subsp. mobilis (strain ATCC 31821 / ZM4 / CP4).